The primary structure comprises 321 residues: Peroxidase 28 (321 aa).

The signal sequence occupies residues 1–21 (MKIATFSVLLLLLFIFPVALA). 4 disulfides stabilise this stretch: cysteine 32-cysteine 111, cysteine 65-cysteine 70, cysteine 117-cysteine 317, and cysteine 196-cysteine 228. The active-site Proton acceptor is the histidine 63. Ca(2+)-binding residues include aspartate 64, valine 67, glycine 69, aspartate 71, and serine 73. Position 159 (proline 159) interacts with substrate. A heme b-binding site is contributed by histidine 189. Residue threonine 190 coordinates Ca(2+). Ca(2+) contacts are provided by aspartate 238, threonine 244, and aspartate 249.

This sequence belongs to the peroxidase family. Classical plant (class III) peroxidase subfamily. The cofactor is heme b. It depends on Ca(2+) as a cofactor.

Its subcellular location is the secreted. The enzyme catalyses 2 a phenolic donor + H2O2 = 2 a phenolic radical donor + 2 H2O. Functionally, removal of H(2)O(2), oxidation of toxic reductants, biosynthesis and degradation of lignin, suberization, auxin catabolism, response to environmental stresses such as wounding, pathogen attack and oxidative stress. These functions might be dependent on each isozyme/isoform in each plant tissue. The chain is Peroxidase 28 (PER28) from Arabidopsis thaliana (Mouse-ear cress).